Here is a 147-residue protein sequence, read N- to C-terminus: Lysozyme C (147 aa).

A signal peptide spans 1 to 18 (MRSLLVLVLCFLPLAALG). Residues 19–147 (KVYGRCELAA…VNAWIRGCRL (129 aa)) form the C-type lysozyme domain. Intrachain disulfides connect Cys24–Cys145, Cys48–Cys133, Cys82–Cys98, and Cys94–Cys112. Catalysis depends on residues Glu53 and Asp70.

The protein belongs to the glycosyl hydrolase 22 family. As to quaternary structure, monomer.

The protein resides in the secreted. The catalysed reaction is Hydrolysis of (1-&gt;4)-beta-linkages between N-acetylmuramic acid and N-acetyl-D-glucosamine residues in a peptidoglycan and between N-acetyl-D-glucosamine residues in chitodextrins.. Lysozymes have primarily a bacteriolytic function; those in tissues and body fluids are associated with the monocyte-macrophage system and enhance the activity of immunoagents. The protein is Lysozyme C (LYZ) of Coturnix japonica (Japanese quail).